The following is a 269-amino-acid chain: Putative pyruvate, phosphate dikinase regulatory protein (269 aa).

153–160 (GVSRTSKT) contacts ADP.

Belongs to the pyruvate, phosphate/water dikinase regulatory protein family. PDRP subfamily.

It catalyses the reaction N(tele)-phospho-L-histidyl/L-threonyl-[pyruvate, phosphate dikinase] + ADP = N(tele)-phospho-L-histidyl/O-phospho-L-threonyl-[pyruvate, phosphate dikinase] + AMP + H(+). The enzyme catalyses N(tele)-phospho-L-histidyl/O-phospho-L-threonyl-[pyruvate, phosphate dikinase] + phosphate + H(+) = N(tele)-phospho-L-histidyl/L-threonyl-[pyruvate, phosphate dikinase] + diphosphate. Its function is as follows. Bifunctional serine/threonine kinase and phosphorylase involved in the regulation of the pyruvate, phosphate dikinase (PPDK) by catalyzing its phosphorylation/dephosphorylation. The protein is Putative pyruvate, phosphate dikinase regulatory protein of Pediococcus pentosaceus (strain ATCC 25745 / CCUG 21536 / LMG 10740 / 183-1w).